Consider the following 264-residue polypeptide: RFTDPKTLAHLLKYDSTFGVYNKKVESRDGAIVVDGREIKIIAERDPKNLPWGKLGXDVVIESTGVFSSATSDKGGYLDHVEAGAGAKKVILTAPAKDEIKTIXLGVXDHDINXDLKAVSNASCTTNCLAPLAKVLHESFGIEQGLMTTVHAYTNXQRILDLPHSDLRRARAAALSIIPTSTGAAKAVGLVLPELKGKLNGTSMRVPVPTGSIVDLTVQLKKKDVTKEEINSVLKKASETPELNGILGYTEDPXVSSDXKGNSH.

The NAD(+) site is built by R45 and T93. D-glyceraldehyde 3-phosphate contacts are provided by residues 123–125 and T154; that span reads SCT. Residue C124 is the Nucleophile of the active site. Residue N155 participates in NAD(+) binding. D-glyceraldehyde 3-phosphate is bound by residues R169, 182–183, and R205; that span reads TG. The interval 245–264 is disordered; it reads GILGYTEDPXVSSDXKGNSH.

It belongs to the glyceraldehyde-3-phosphate dehydrogenase family. In terms of assembly, homotetramer.

The protein localises to the cytoplasm. It carries out the reaction D-glyceraldehyde 3-phosphate + phosphate + NAD(+) = (2R)-3-phospho-glyceroyl phosphate + NADH + H(+). It functions in the pathway carbohydrate degradation; glycolysis; pyruvate from D-glyceraldehyde 3-phosphate: step 1/5. Functionally, catalyzes the oxidative phosphorylation of glyceraldehyde 3-phosphate (G3P) to 1,3-bisphosphoglycerate (BPG) using the cofactor NAD. The first reaction step involves the formation of a hemiacetal intermediate between G3P and a cysteine residue, and this hemiacetal intermediate is then oxidized to a thioester, with concomitant reduction of NAD to NADH. The reduced NADH is then exchanged with the second NAD, and the thioester is attacked by a nucleophilic inorganic phosphate to produce BPG. This is Glyceraldehyde-3-phosphate dehydrogenase (gap) from Borrelia hermsii.